The primary structure comprises 691 residues: Elongation factor G (691 aa).

The 275-residue stretch at 10 to 284 (KRLRNIGIAA…AVVDYLPSPL (275 aa)) folds into the tr-type G domain. GTP contacts are provided by residues 19-26 (AHIDAGKT), 83-87 (DTPGH), and 137-140 (NKMD).

This sequence belongs to the TRAFAC class translation factor GTPase superfamily. Classic translation factor GTPase family. EF-G/EF-2 subfamily.

Its subcellular location is the cytoplasm. Catalyzes the GTP-dependent ribosomal translocation step during translation elongation. During this step, the ribosome changes from the pre-translocational (PRE) to the post-translocational (POST) state as the newly formed A-site-bound peptidyl-tRNA and P-site-bound deacylated tRNA move to the P and E sites, respectively. Catalyzes the coordinated movement of the two tRNA molecules, the mRNA and conformational changes in the ribosome. In Thermus thermophilus (strain ATCC 27634 / DSM 579 / HB8), this protein is Elongation factor G (fusA).